Here is a 406-residue protein sequence, read N- to C-terminus: Formate-dependent phosphoribosylglycinamide formyltransferase (406 aa).

N(1)-(5-phospho-beta-D-ribosyl)glycinamide is bound by residues 27 to 28 (EL) and Glu-87. ATP-binding positions include Arg-120, Lys-162, 167-172 (SSGKGQ), 202-205 (EGFI), and Glu-210. Residues 125-320 (RLAAETLGLP…EFELHARALL (196 aa)) form the ATP-grasp domain. Glu-279 and Glu-291 together coordinate Mg(2+). Residues Asp-298, Lys-367, and 374–375 (RR) each bind N(1)-(5-phospho-beta-D-ribosyl)glycinamide.

Belongs to the PurK/PurT family. Homodimer.

The catalysed reaction is N(1)-(5-phospho-beta-D-ribosyl)glycinamide + formate + ATP = N(2)-formyl-N(1)-(5-phospho-beta-D-ribosyl)glycinamide + ADP + phosphate + H(+). It functions in the pathway purine metabolism; IMP biosynthesis via de novo pathway; N(2)-formyl-N(1)-(5-phospho-D-ribosyl)glycinamide from N(1)-(5-phospho-D-ribosyl)glycinamide (formate route): step 1/1. Involved in the de novo purine biosynthesis. Catalyzes the transfer of formate to 5-phospho-ribosyl-glycinamide (GAR), producing 5-phospho-ribosyl-N-formylglycinamide (FGAR). Formate is provided by PurU via hydrolysis of 10-formyl-tetrahydrofolate. The chain is Formate-dependent phosphoribosylglycinamide formyltransferase from Bordetella bronchiseptica (strain ATCC BAA-588 / NCTC 13252 / RB50) (Alcaligenes bronchisepticus).